The primary structure comprises 536 residues: Membrane protein insertase YidC (536 aa).

A helical transmembrane segment spans residues 5-25 (ALIAVILSIVFFYGYSALFPP). A disordered region spans residues 30-54 (APAPSAQQAVTGSQPGAPQASVAAV). Positions 31–54 (PAPSAQQAVTGSQPGAPQASVAAV) are enriched in low complexity. 4 helical membrane-spanning segments follow: residues 350 to 370 (YGIA…PLTH), 420 to 440 (LPML…MFSI), 454 to 474 (LAGK…MVIQ), and 494 to 514 (PVVF…YWLV).

Belongs to the OXA1/ALB3/YidC family. Type 1 subfamily. Interacts with the Sec translocase complex via SecD. Specifically interacts with transmembrane segments of nascent integral membrane proteins during membrane integration.

It is found in the cell inner membrane. Its function is as follows. Required for the insertion and/or proper folding and/or complex formation of integral membrane proteins into the membrane. Involved in integration of membrane proteins that insert both dependently and independently of the Sec translocase complex, as well as at least some lipoproteins. Aids folding of multispanning membrane proteins. The sequence is that of Membrane protein insertase YidC from Geobacter metallireducens (strain ATCC 53774 / DSM 7210 / GS-15).